The following is a 244-amino-acid chain: MQAINPNWNVPKNIHAFTTTREGGVSLAPYLSFNLGDHVGDNKSAVKTNRTLLVEKFGLPQTPIFLTQTHSTRVIQLPYSGQNLEADAVYTNVPNQVCVVMTADCLPVLFTTTSGNEVAATHAGWRGLCDGVLEETVKYFQAKPEDIIAWFGPAIGPKAFQVGIDVVEKFVVVDEKAKLAFQPDAIEEGKYLSNLYQIATQRLNNLGITQIYGGNHCTFNEKEKFFSYRRDNQTGRMASVIWFE.

Residues His-70, Cys-105, and His-122 each contribute to the Zn(2+) site.

Belongs to the purine nucleoside phosphorylase YfiH/LACC1 family. In terms of assembly, homodimer. Requires Cu(2+) as cofactor. It depends on Zn(2+) as a cofactor.

The enzyme catalyses adenosine + phosphate = alpha-D-ribose 1-phosphate + adenine. The catalysed reaction is S-methyl-5'-thioadenosine + phosphate = 5-(methylsulfanyl)-alpha-D-ribose 1-phosphate + adenine. It catalyses the reaction inosine + phosphate = alpha-D-ribose 1-phosphate + hypoxanthine. It carries out the reaction adenosine + H2O + H(+) = inosine + NH4(+). In terms of biological role, purine nucleoside enzyme that catalyzes the phosphorolysis of adenosine and inosine nucleosides, yielding D-ribose 1-phosphate and the respective free bases, adenine and hypoxanthine. Also catalyzes the phosphorolysis of S-methyl-5'-thioadenosine into adenine and S-methyl-5-thio-alpha-D-ribose 1-phosphate. Also has adenosine deaminase activity. The polypeptide is Purine nucleoside phosphorylase HI_0175 (Haemophilus influenzae (strain ATCC 51907 / DSM 11121 / KW20 / Rd)).